A 340-amino-acid polypeptide reads, in one-letter code: MELAYIPSPARGVLYLGPIPLRGYAFCIIIGVFVAVWLGNKRWVARGGRPGTVADIAVWAVPFGLVGGRLYHVITDYELYFSEGRDWVDAFKIWEGGLGIWGAIALGAVGAWIGCRRRGIPLPAWADAVAPGIAFAQAFGRWGNWFNQELYGRETHVPWALHITSSTDGRVPGYYHPTFLYESLWCVGVGFLVIWADRRFKLGHGRAFALYVAAYCVGRAWIEYMRVDDAHHILGVRLNDWTAIAVFLLAVLYIVLSSRKRPGREEIVEPGASDTGTGADDPVDLGKDEDKATTDKATATDTSTTTDKSTDRGKNEDENEGEDAEPSEKTESAAESAKKV.

Helical transmembrane passes span Ile19–Gly39, Ala54–Ile74, Ile93–Ile113, and Gly119–Phe139. A 1,2-diacyl-sn-glycero-3-phospho-(1'-sn-glycerol) is bound at residue Arg141. 3 helical membrane-spanning segments follow: residues His176–Ala196, Leu202–Trp221, and Leu238–Ser258. A disordered region spans residues Glu266 to Val340. Residues Asp284–Thr294 show a composition bias toward basic and acidic residues. A compositionally biased stretch (low complexity) spans Asp295–Asp307. Over residues Pro326–Val340 the composition is skewed to basic and acidic residues.

Belongs to the Lgt family.

It localises to the cell membrane. It catalyses the reaction L-cysteinyl-[prolipoprotein] + a 1,2-diacyl-sn-glycero-3-phospho-(1'-sn-glycerol) = an S-1,2-diacyl-sn-glyceryl-L-cysteinyl-[prolipoprotein] + sn-glycerol 1-phosphate + H(+). The protein operates within protein modification; lipoprotein biosynthesis (diacylglyceryl transfer). In terms of biological role, catalyzes the transfer of the diacylglyceryl group from phosphatidylglycerol to the sulfhydryl group of the N-terminal cysteine of a prolipoprotein, the first step in the formation of mature lipoproteins. This Streptomyces avermitilis (strain ATCC 31267 / DSM 46492 / JCM 5070 / NBRC 14893 / NCIMB 12804 / NRRL 8165 / MA-4680) protein is Phosphatidylglycerol--prolipoprotein diacylglyceryl transferase.